A 441-amino-acid polypeptide reads, in one-letter code: Amino-acid acetyltransferase (441 aa).

An N-acetyltransferase domain is found at 295 to 434 (EKVRGAGIDD…KALYNFQRRS (140 aa)).

This sequence belongs to the acetyltransferase family. ArgA subfamily.

It is found in the cytoplasm. The catalysed reaction is L-glutamate + acetyl-CoA = N-acetyl-L-glutamate + CoA + H(+). It participates in amino-acid biosynthesis; L-arginine biosynthesis; N(2)-acetyl-L-ornithine from L-glutamate: step 1/4. This is Amino-acid acetyltransferase from Photobacterium profundum (strain SS9).